Here is a 195-residue protein sequence, read N- to C-terminus: Imidazoleglycerol-phosphate dehydratase (195 aa).

Belongs to the imidazoleglycerol-phosphate dehydratase family.

The protein localises to the cytoplasm. The enzyme catalyses D-erythro-1-(imidazol-4-yl)glycerol 3-phosphate = 3-(imidazol-4-yl)-2-oxopropyl phosphate + H2O. It functions in the pathway amino-acid biosynthesis; L-histidine biosynthesis; L-histidine from 5-phospho-alpha-D-ribose 1-diphosphate: step 6/9. The sequence is that of Imidazoleglycerol-phosphate dehydratase from Shouchella clausii (strain KSM-K16) (Alkalihalobacillus clausii).